Consider the following 867-residue polypeptide: Bifunctional diterpene synthase, chloroplastic (867 aa).

The N-terminal 55 residues, 1-55 (MAKVLFSSFQQTGISGSLKSGQLSGVFINGTNLKSNAHAKRFRKNSTSSITIRCC), are a transit peptide targeting the chloroplast. A substrate-binding site is contributed by Lys255. Mg(2+)-binding residues include Asp389 and Asp391. A DXDD motif motif is present at residues 389 to 392 (DIDD). Position 474 (Lys474) interacts with substrate. Residues Asp611, Asp615, Asn758, Thr762, and Glu766 each contribute to the Mg(2+) site. The DDXXD motif motif lies at 611–615 (DDLMD).

This sequence belongs to the terpene synthase family. Requires Mg(2+) as cofactor.

Its subcellular location is the plastid. The protein localises to the chloroplast. The catalysed reaction is (+)-copalyl diphosphate = miltiradiene + diphosphate. It catalyses the reaction (2E,6E,10E)-geranylgeranyl diphosphate = (+)-copalyl diphosphate. Its pathway is secondary metabolite biosynthesis; terpenoid biosynthesis. Bifunctional diterpene cyclase that catalyzes the successive two-step type-B (protonation-initiated cyclization) and type-A (ionization-initiated cyclization) reactions of geranylgeranyl diphosphate (GGDP) producing successively (+)-copalyl diphosphate and miltiradiene. The chain is Bifunctional diterpene synthase, chloroplastic (MDS) from Selaginella moellendorffii (Spikemoss).